The primary structure comprises 186 residues: Peptidyl-tRNA hydrolase (186 aa).

Tyr13 contacts tRNA. Catalysis depends on His18, which acts as the Proton acceptor. Positions 59, 61, and 107 each coordinate tRNA.

It belongs to the PTH family. In terms of assembly, monomer.

The protein localises to the cytoplasm. It catalyses the reaction an N-acyl-L-alpha-aminoacyl-tRNA + H2O = an N-acyl-L-amino acid + a tRNA + H(+). Hydrolyzes ribosome-free peptidyl-tRNAs (with 1 or more amino acids incorporated), which drop off the ribosome during protein synthesis, or as a result of ribosome stalling. Functionally, catalyzes the release of premature peptidyl moieties from peptidyl-tRNA molecules trapped in stalled 50S ribosomal subunits, and thus maintains levels of free tRNAs and 50S ribosomes. The chain is Peptidyl-tRNA hydrolase from Thermotoga sp. (strain RQ2).